The sequence spans 189 residues: dTTP/UTP pyrophosphatase (189 aa).

Asp71 acts as the Proton acceptor in catalysis.

The protein belongs to the Maf family. YhdE subfamily. A divalent metal cation is required as a cofactor.

It is found in the cytoplasm. It carries out the reaction dTTP + H2O = dTMP + diphosphate + H(+). The catalysed reaction is UTP + H2O = UMP + diphosphate + H(+). Nucleoside triphosphate pyrophosphatase that hydrolyzes dTTP and UTP. May have a dual role in cell division arrest and in preventing the incorporation of modified nucleotides into cellular nucleic acids. This is dTTP/UTP pyrophosphatase from Pseudoalteromonas translucida (strain TAC 125).